A 325-amino-acid chain; its full sequence is Probable cell division protein WhiA (325 aa).

A DNA-binding region (H-T-H motif) is located at residues 280–313 (SLKELGSMLKNPLGKSGVNHRLRKIDKIAEELRK).

It belongs to the WhiA family.

Functionally, involved in cell division and chromosome segregation. In Caldicellulosiruptor saccharolyticus (strain ATCC 43494 / DSM 8903 / Tp8T 6331), this protein is Probable cell division protein WhiA.